The following is a 184-amino-acid chain: Photosystem I assembly protein Ycf4 (184 aa).

2 helical membrane passes run 19 to 39 (ISNFCWAFILFLGSLGFVLVG) and 57 to 77 (ILFFPQGIVMSFYGIAGLFIS).

Belongs to the Ycf4 family.

It localises to the plastid. The protein localises to the chloroplast thylakoid membrane. In terms of biological role, seems to be required for the assembly of the photosystem I complex. This Eucalyptus globulus subsp. globulus (Tasmanian blue gum) protein is Photosystem I assembly protein Ycf4.